A 252-amino-acid polypeptide reads, in one-letter code: Aspartate/glutamate leucyltransferase (252 aa).

Belongs to the R-transferase family. Bpt subfamily.

The protein resides in the cytoplasm. The catalysed reaction is N-terminal L-glutamyl-[protein] + L-leucyl-tRNA(Leu) = N-terminal L-leucyl-L-glutamyl-[protein] + tRNA(Leu) + H(+). It carries out the reaction N-terminal L-aspartyl-[protein] + L-leucyl-tRNA(Leu) = N-terminal L-leucyl-L-aspartyl-[protein] + tRNA(Leu) + H(+). Functions in the N-end rule pathway of protein degradation where it conjugates Leu from its aminoacyl-tRNA to the N-termini of proteins containing an N-terminal aspartate or glutamate. This is Aspartate/glutamate leucyltransferase from Hyphomonas neptunium (strain ATCC 15444).